Here is a 562-residue protein sequence, read N- to C-terminus: Sensor histidine kinase MtrB (562 aa).

Transmembrane regions (helical) follow at residues 42–62 (VVALTFGLSLAVILALGFVLT) and 213–233 (GTMATGGMVLLVLLSGIALLV). Positions 235–287 (RQVVVPVRSASRIAERFAEGHLSERMPVRGEDDMARLAVSFNDMAESLSRQIT) constitute an HAMP domain. One can recognise a Histidine kinase domain in the interval 302–519 (DVSHELRTPL…CFRLTLPLVR (218 aa)). Positions 526-562 (SPLPMKPILQPSPQASTAGQQHGTQRQRLREHAERSR) are disordered. Positions 536 to 551 (PSPQASTAGQQHGTQR) are enriched in polar residues. Residues 553–562 (RLREHAERSR) show a composition bias toward basic and acidic residues.

Its subcellular location is the cell membrane. The enzyme catalyses ATP + protein L-histidine = ADP + protein N-phospho-L-histidine.. In terms of biological role, member of the two-component regulatory system MtrA/MtrB. Seems to function as a membrane-associated protein kinase that phosphorylates MtrA in response to environmental signals. The chain is Sensor histidine kinase MtrB (mtrB) from Mycobacterium leprae (strain TN).